Here is a 271-residue protein sequence, read N- to C-terminus: Probable septum site-determining protein MinC (271 aa).

Positions 106–125 (RRAPSPKAADDAPAQPEEPR) are disordered. Over residues 110-119 (SPKAADDAPA) the composition is skewed to low complexity.

This sequence belongs to the MinC family. As to quaternary structure, interacts with MinD and FtsZ.

In terms of biological role, cell division inhibitor that blocks the formation of polar Z ring septums. Rapidly oscillates between the poles of the cell to destabilize FtsZ filaments that have formed before they mature into polar Z rings. Prevents FtsZ polymerization. In Burkholderia thailandensis (strain ATCC 700388 / DSM 13276 / CCUG 48851 / CIP 106301 / E264), this protein is Probable septum site-determining protein MinC.